The primary structure comprises 161 residues: Nucleotide-binding protein Bphy_0527 (161 aa).

Belongs to the YajQ family.

In terms of biological role, nucleotide-binding protein. The chain is Nucleotide-binding protein Bphy_0527 from Paraburkholderia phymatum (strain DSM 17167 / CIP 108236 / LMG 21445 / STM815) (Burkholderia phymatum).